A 338-amino-acid chain; its full sequence is MLIAQRPTLTEEVVADNRSRFVIEPLEPGFGYTLGNSLRRTLLSSIPGAAVTSIRIDGVLHEFTTVPGVKEDVTEIILNIKNIVVSSENDEPVVMYLRKQGPGVVTAADITPPAGVEVHNPDLHIATVNGKGKLEVELTVERGRGYVSAQQNKAYDTEIGRIPVDSIYSPVLKVTYKVEATRVEQRTDFDKLIVDVESKPAISPRDAVASAGKTLVELFGLARELNTAAEGIEIGPSPTDAALAADLALPIEDLDLTIRSYNCLKREGIHQVGELVARSEADLLDIRNFGAKSITEVKEKLAALGLSLKDSPADFDPSLVTDAYDGDLDADYADEQYN.

The tract at residues 1–226 (MLIAQRPTLT…ELFGLARELN (226 aa)) is alpha N-terminal domain (alpha-NTD). Residues 243–338 (LAADLALPIE…DADYADEQYN (96 aa)) are alpha C-terminal domain (alpha-CTD).

It belongs to the RNA polymerase alpha chain family. As to quaternary structure, homodimer. The RNAP catalytic core consists of 2 alpha, 1 beta, 1 beta' and 1 omega subunit. When a sigma factor is associated with the core the holoenzyme is formed, which can initiate transcription.

The enzyme catalyses RNA(n) + a ribonucleoside 5'-triphosphate = RNA(n+1) + diphosphate. DNA-dependent RNA polymerase catalyzes the transcription of DNA into RNA using the four ribonucleoside triphosphates as substrates. The protein is DNA-directed RNA polymerase subunit alpha of Beutenbergia cavernae (strain ATCC BAA-8 / DSM 12333 / CCUG 43141 / JCM 11478 / NBRC 16432 / NCIMB 13614 / HKI 0122).